Consider the following 714-residue polypeptide: Elongation factor G-like protein (714 aa).

One can recognise a tr-type G domain in the interval 21-289; the sequence is GGVRNVVLVG…VATRGFPSPM (269 aa). The segment at 30 to 37 is G1; that stretch reads GPSGGGKT. 30-37 serves as a coordination point for GTP; the sequence is GPSGGGKT. The interval 73-77 is G2; the sequence is QRSVG. A G3 region spans residues 94-97; it reads DTPG. GTP-binding positions include 94–98 and 148–151; these read DTPGY and TKLD. Positions 148-151 are G4; the sequence is TKLD. The G5 stretch occupies residues 267–269; that stretch reads CSS.

This sequence belongs to the TRAFAC class translation factor GTPase superfamily. Classic translation factor GTPase family. EF-G/EF-2 subfamily.

The chain is Elongation factor G-like protein from Mycobacterium tuberculosis (strain CDC 1551 / Oshkosh).